The primary structure comprises 268 residues: F-actin-capping protein subunit beta (268 aa).

The protein belongs to the F-actin-capping protein beta subunit family. Component of the F-actin capping complex, composed of a heterodimer of an alpha and a beta subunit.

It is found in the cytoplasm. The protein resides in the cytoskeleton. Its subcellular location is the actin patch. The protein localises to the nucleus. Functionally, F-actin-capping proteins bind in a Ca(2+)-independent manner to the fast growing ends of actin filaments (barbed end) thereby blocking the exchange of subunits at these ends. Unlike other capping proteins (such as gelsolin and severin), these proteins do not sever actin filaments. Competes with formin cdc12 for attachment to the actin filaments barbed ends. Slowly replaces cdc12 on the barbed ends in preparation for filament disassembly during contractile ring constriction. The protein is F-actin-capping protein subunit beta (acp2) of Schizosaccharomyces pombe (strain 972 / ATCC 24843) (Fission yeast).